A 65-amino-acid polypeptide reads, in one-letter code: Adrenergic toxin rho-elapitoxin-Dp1b (65 aa).

4 disulfides stabilise this stretch: cysteine 3–cysteine 24, cysteine 17–cysteine 42, cysteine 46–cysteine 57, and cysteine 58–cysteine 63.

It belongs to the three-finger toxin family. Short-chain subfamily. Aminergic toxin sub-subfamily. As to expression, expressed by the venom gland.

It localises to the secreted. Functionally, highly potent on various alpha-adrenoceptors (ADRA) (subnanomolar affinity for ADRA1A). Order of potency is the following: ADRA1A (Ki=0.37 nM) &gt; ADRA1B (Ki=10.47 nM) &gt; ADRA1D (Ki=104.71 nM) &gt; ADRA2C (Ki=165.96 nM). Were also found to reversibly bind to muscarinic acetylcholine receptors (CHRM), but the affinity is much weaker (CHRM1, Ki=1778.28 nM; CHRM4, Ki=4466.84 nM; CHRM2, Ki=17782.79 nM). The protein is Adrenergic toxin rho-elapitoxin-Dp1b of Dendroaspis polylepis polylepis (Black mamba).